The chain runs to 330 residues: D-cysteine desulfhydrase (330 aa).

Lysine 52 bears the N6-(pyridoxal phosphate)lysine mark.

Belongs to the ACC deaminase/D-cysteine desulfhydrase family. As to quaternary structure, homodimer. Pyridoxal 5'-phosphate serves as cofactor.

It carries out the reaction D-cysteine + H2O = hydrogen sulfide + pyruvate + NH4(+) + H(+). In terms of biological role, catalyzes the alpha,beta-elimination reaction of D-cysteine and of several D-cysteine derivatives. It could be a defense mechanism against D-cysteine. This is D-cysteine desulfhydrase from Yersinia pseudotuberculosis serotype O:1b (strain IP 31758).